The primary structure comprises 780 residues: Subtilisin-like protease SBT5.1 (780 aa).

A signal peptide spans 1-25; sequence MMRCLTITIMFFMFFFLSVIQKCKS. The propeptide at 26 to 106 is activation peptide; sequence ETSKSGDYII…VFPDQMLQLH (81 aa). The 74-residue stretch at 33–106 folds into the Inhibitor I9 domain; sequence YIIYMGAASS…VFPDQMLQLH (74 aa). The Peptidase S8 domain maps to 110–617; it reads SWDFLVQESY…AGQVTIFGPS (508 aa). Residue aspartate 147 is the Charge relay system of the active site. A glycan (N-linked (GlcNAc...) asparagine) is linked at asparagine 197. Catalysis depends on histidine 215, which acts as the Charge relay system. Asparagine 230 carries an N-linked (GlcNAc...) asparagine glycan. The 85-residue stretch at 385 to 469 folds into the PA domain; that stretch reads IDANEEAARN…PEDGIQIMSY (85 aa). A glycan (N-linked (GlcNAc...) asparagine) is linked at asparagine 471. Serine 550 serves as the catalytic Charge relay system. N-linked (GlcNAc...) asparagine glycosylation is present at asparagine 776.

This sequence belongs to the peptidase S8 family.

Its subcellular location is the secreted. The chain is Subtilisin-like protease SBT5.1 from Arabidopsis thaliana (Mouse-ear cress).